Consider the following 529-residue polypeptide: NADPH-dependent thioredoxin reductase 3 (529 aa).

A chloroplast-targeting transit peptide spans 1-67; that stretch reads MAASPKIGIG…SSDSLRLRVS (67 aa). Residues 54–78 form a disordered region; it reads TRTRSSDSLRLRVSATANSPSSSSS. Residues 64–78 show a composition bias toward low complexity; sequence LRVSATANSPSSSSS. FAD-binding positions include 91-94, 113-120, Asn133, Val166, and Cys220; these read SGPA and EGYQMGGV. Residues Cys217 and Cys220 are joined by a disulfide bond. 4 residues coordinate NADP(+): Thr240, Arg265, Ile324, and Tyr344. FAD is bound by residues Asp364 and 371 to 374; that span reads RQAV. Arg371 is an NADP(+) binding site. The 127-residue stretch at 403 to 529 folds into the Thioredoxin domain; sequence PQTEEAKKEF…EYREFIEANK (127 aa). Active-site nucleophile residues include Cys454 and Cys457. A disulfide bridge links Cys454 with Cys457.

This sequence belongs to the class-II pyridine nucleotide-disulfide oxidoreductase family. May homodimerize. Interacts with the 2-Cys peroxiredoxin BAS1. FAD serves as cofactor.

The protein resides in the plastid. It localises to the chloroplast. The enzyme catalyses [thioredoxin]-dithiol + NADP(+) = [thioredoxin]-disulfide + NADPH + H(+). In terms of biological role, thioredoxin reductase (TR) that exhibits both TR and thioredoxin (Trx) activities. Contains a C-terminal functional Trx domain. Functions as an electron donor for plastidial 2-Cys peroxiredoxins and participates in a NADPH-dependent hydrogen peroxide scavenging system in chloroplasts in the dark. Required for chlorophyll biosynthesis and biogenesis of the photosynthetic apparatus. Activates aerobic cyclase which converts Mg-protoporhyrin monomethyl ester into protochlorophyllide. Involved in a light-dependent regulation of starch biosynthesis by redox activation of the ADP-glucose pyrophosphorylase (AGPase), a central enzyme of starch synthesis. This Arabidopsis thaliana (Mouse-ear cress) protein is NADPH-dependent thioredoxin reductase 3.